A 462-amino-acid polypeptide reads, in one-letter code: A-type ATP synthase subunit B (462 aa).

This sequence belongs to the ATPase alpha/beta chains family. Has multiple subunits with at least A(3), B(3), C, D, E, F, H, I and proteolipid K(x).

Its subcellular location is the cell membrane. Its function is as follows. Component of the A-type ATP synthase that produces ATP from ADP in the presence of a proton gradient across the membrane. The B chain is a regulatory subunit. The chain is A-type ATP synthase subunit B from Pyrococcus furiosus (strain ATCC 43587 / DSM 3638 / JCM 8422 / Vc1).